The following is a 197-amino-acid chain: FMN-dependent NADH:quinone oxidoreductase (197 aa).

Position 10 (S10) interacts with FMN.

The protein belongs to the azoreductase type 1 family. As to quaternary structure, homodimer. The cofactor is FMN.

The catalysed reaction is 2 a quinone + NADH + H(+) = 2 a 1,4-benzosemiquinone + NAD(+). It catalyses the reaction N,N-dimethyl-1,4-phenylenediamine + anthranilate + 2 NAD(+) = 2-(4-dimethylaminophenyl)diazenylbenzoate + 2 NADH + 2 H(+). In terms of biological role, quinone reductase that provides resistance to thiol-specific stress caused by electrophilic quinones. Also exhibits azoreductase activity. Catalyzes the reductive cleavage of the azo bond in aromatic azo compounds to the corresponding amines. The chain is FMN-dependent NADH:quinone oxidoreductase from Mycoplasma pneumoniae (strain ATCC 29342 / M129 / Subtype 1) (Mycoplasmoides pneumoniae).